The primary structure comprises 162 residues: NADH-quinone oxidoreductase subunit I 2 (162 aa).

4Fe-4S ferredoxin-type domains are found at residues 53-83 (LRRY…IESE) and 93-122 (TRYD…ETRI). [4Fe-4S] cluster-binding residues include Cys-63, Cys-66, Cys-69, Cys-73, Cys-102, Cys-105, Cys-108, and Cys-112.

This sequence belongs to the complex I 23 kDa subunit family. NDH-1 is composed of 14 different subunits. Subunits NuoA, H, J, K, L, M, N constitute the membrane sector of the complex. The cofactor is [4Fe-4S] cluster.

The protein resides in the cell inner membrane. The enzyme catalyses a quinone + NADH + 5 H(+)(in) = a quinol + NAD(+) + 4 H(+)(out). In terms of biological role, NDH-1 shuttles electrons from NADH, via FMN and iron-sulfur (Fe-S) centers, to quinones in the respiratory chain. The immediate electron acceptor for the enzyme in this species is believed to be ubiquinone. Couples the redox reaction to proton translocation (for every two electrons transferred, four hydrogen ions are translocated across the cytoplasmic membrane), and thus conserves the redox energy in a proton gradient. In Nitrosospira multiformis (strain ATCC 25196 / NCIMB 11849 / C 71), this protein is NADH-quinone oxidoreductase subunit I 2.